The sequence spans 313 residues: Nodulation protein D 3 (313 aa).

The HTH lysR-type domain maps to 6 to 63 (LDLNLLVALDALMTKRSVTAAARSINLSQPAMSSAIARLRSYFQDELFRMQGRELITT). Residues 23–42 (VTAAARSINLSQPAMSSAIA) constitute a DNA-binding region (H-T-H motif).

This sequence belongs to the LysR transcriptional regulatory family.

Functionally, nodD regulates the expression of the nodABCFE genes which encode other nodulation proteins. NodD is also a negative regulator of its own expression. Binds flavonoids as inducers. This is Nodulation protein D 3 (nodD3) from Rhizobium meliloti (strain 1021) (Ensifer meliloti).